The sequence spans 551 residues: MDELFPLIFPAEPAQASGPYVEIIEQPKQRGMRFRYKCEGRSAGSIPGERSTDTTKTHPTIKINGYTGPGTVRISLVTKDPPHRPHPHELVGKDCRDGFYEAELCPDRCIHSFQNLGIQCVKKRDLEQAISQRIQTNNNPFQVPIEEQRGDYDLNAVRLCFQVTVRDPSGRPLRLPPVLSHPIFDNRAPNTAELKICRVNRNSGSCLGGDEIFLLCDKVQKEDIEVYFTGPGWEARGSFSQADVHRQVAIVFRTPPYADPSLQAPVRVSMQLRRPSDRELSEPMEFQYLPDTDDRHRIEEKRKRTYETFKSIMKKSPFSGPTDPRPPPRRIAVPSRSSASVPKPAPQPYPFTSSLSTINYDEFPTMVFPSGQISQASALAPAPPQVLPQAPAPAPAPAMVSALAQAPAPVPVLAPGPPQAVAPPAPKPTQAGEGTLSEALLQLQFDDEDLGALLGNSTDPAVFTDLASVDNSEFQQLLNQGIPVAPHTTEPMLMEYPEAITRLVTGAQRPPDPAPAPLGAPGLPNGLLSGDEDFSSIADMDFSALLSQISS.

Position 1 is an N-acetylmethionine (M1). An RHD domain is found at 19 to 306 (PYVEIIEQPK…RIEEKRKRTY (288 aa)). K37 participates in a covalent cross-link: Glycyl lysine isopeptide (Lys-Gly) (interchain with G-Cter in SUMO3). C38 bears the Cysteine persulfide; alternate mark. Position 38 is an S-nitrosocysteine; alternate (C38). (Microbial infection) Phosphoserine is present on S75. An N6-acetyllysine; by PCAF and EP300; alternate mark is found at K122 and K123. Glycyl lysine isopeptide (Lys-Gly) (interchain with G-Cter in SUMO3); alternate cross-links involve residues K122 and K123. An N6-acetyllysine mark is found at K218 and K221. T254 is subject to Phosphothreonine. A Phosphoserine; by RPS6KA4 and RPS6KA5 modification is found at S276. S281 bears the Phosphoserine mark. The short motif at 301 to 304 (KRKR) is the Nuclear localization signal element. The segment at 309–348 (FKSIMKKSPFSGPTDPRPPPRRIAVPSRSSASVPKPAPQP) is disordered. K310 bears the N6-acetyllysine; alternate mark. Position 310 is an N6-methyllysine; by SETD6; alternate (K310). S311 is modified (phosphoserine; by PKC/PRKCZ). Transcriptional activation domain stretches follow at residues 342–389 (PKPA…VLPQ) and 415–476 (PGPP…EFQQ). T435 carries the phosphothreonine modification. S468 carries the phosphoserine; by IKKB and IKKE modification. At T505 the chain carries Phosphothreonine; by CHEK1. A disordered region spans residues 506 to 530 (GAQRPPDPAPAPLGAPGLPNGLLSG). The segment covering 519–528 (GAPGLPNGLL) has biased composition (low complexity). The segment at 520-551 (APGLPNGLLSGDEDFSSIADMDFSALLSQISS) is transcriptional activation domain 2. Residue S529 is modified to Phosphoserine; by CK2. S536 bears the Phosphoserine; by IKKB mark. Positions 536–544 (SIADMDFSA) match the 9aaTAD motif.

Component of the NF-kappa-B p65-p50 complex. Component of the NF-kappa-B p65-c-Rel complex. Homodimer; component of the NF-kappa-B p65-p65 complex. Component of the NF-kappa-B p65-p52 complex. May interact with ETHE1. Binds TLE5 and TLE1. Interacts with TP53BP2. Binds to and is phosphorylated by the activated form of either RPS6KA4 or RPS6KA5. Interacts with ING4 and this interaction may be indirect. Interacts with CARM1, USP48 and UNC5CL. Interacts with IRAK1BP1. Interacts with NFKBID. Interacts with NFKBIA. Interacts with GSK3B. Interacts with NFKBIB. Interacts with NFKBIE. Interacts with NFKBIZ. Interacts with EHMT1 (via ANK repeats). Part of a 70-90 kDa complex at least consisting of CHUK, IKBKB, NFKBIA, RELA, ELP1 and MAP3K14. Interacts with HDAC3; HDAC3 mediates the deacetylation of RELA. Interacts with HDAC1; the interaction requires non-phosphorylated RELA. Interacts with CBP; the interaction requires phosphorylated RELA. Interacts (phosphorylated at 'Thr-254') with PIN1; the interaction inhibits p65 binding to NFKBIA. Interacts with SOCS1. Interacts with UXT. Interacts with MTDH and PHF11. Interacts with ARRB2. Interacts with NFKBIA (when phosphorylated), the interaction is direct; phosphorylated NFKBIA is part of a SCF(BTRC)-like complex lacking CUL1. Interacts with RNF25. Interacts (via C-terminus) with DDX1. Interacts with UFL1 and COMMD1. Interacts with BRMS1; this promotes deacetylation of 'Lys-310'. Interacts with NOTCH2. Directly interacts with MEN1; this interaction represses NFKB-mediated transactivation. Interacts with AKIP1, which promotes the phosphorylation and nuclear retention of RELA. Interacts (via the RHD) with GFI1; the interaction, after bacterial lipopolysaccharide (LPS) stimulation, inhibits the transcriptional activity by interfering with the DNA-binding activity to target gene promoter DNA. Interacts (when acetylated at Lys-310) with BRD4; leading to activation of the NF-kappa-B pathway. Interacts with MEFV. Interacts with CLOCK. Interacts (via N-terminus) with CPEN1; this interaction induces proteolytic cleavage of p65/RELA subunit and inhibition of NF-kappa-B transcriptional activity. Interacts with FOXP3. Interacts with CDK5RAP3; stimulates the interaction of RELA with HDAC1, HDAC2 and HDAC3 thereby inhibiting NF-kappa-B transcriptional activity. Interacts with DHX9; this interaction is direct and activates NF-kappa-B-mediated transcription. Interacts with LRRC25. Interacts with TBX21. Interacts with KAT2A. Interacts with ZBTB7A; involved in the control by RELA of the accessibility of target gene promoters. Directly interacts with DDX3X; this interaction may trap RELA in the cytoplasm, impairing nuclear relocalization upon TNF activating signals. Interacts with PHF2. Interacts with MKRN2; the interaction leads to its polyubiquitination and proteasome-dependent degradation. Interacts with ECSIT. Interacts with RAB28; the interaction contributes to RELA transport from cytoplasm to nucleus. In terms of assembly, (Microbial infection) Interacts with human respiratory syncytial virus (HRSV) protein M2-1. As to quaternary structure, (Microbial infection) Interacts with molluscum contagiosum virus MC132. (Microbial infection) Interacts with herpes virus 8 virus protein LANA1. In terms of assembly, (Microbial infection) Interacts with human cytomegalovirus protein UL44; this interaction prevents NF-kappa-B binding to its promoters. In terms of processing, ubiquitinated by RNF182, leading to its proteasomal degradation. Degradation is required for termination of NF-kappa-B response. Polyubiquitinated via 'Lys-29'-linked ubiquitin; leading to lysosomal degradation. Post-translationally, monomethylated at Lys-310 by SETD6. Monomethylation at Lys-310 is recognized by the ANK repeats of EHMT1 and promotes the formation of repressed chromatin at target genes, leading to down-regulation of NF-kappa-B transcription factor activity. Phosphorylation at Ser-311 disrupts the interaction with EHMT1 without preventing monomethylation at Lys-310 and relieves the repression of target genes. Phosphorylation at Ser-311 disrupts the interaction with EHMT1 and promotes transcription factor activity. Phosphorylation on Ser-536 stimulates acetylation on Lys-310 and interaction with CBP; the phosphorylated and acetylated forms show enhanced transcriptional activity. Phosphorylation at Ser-276 by RPS6KA4 and RPS6KA5 promotes its transactivation and transcriptional activities. In terms of processing, phosphorylation at Ser-75 by herpes simplex virus 1/HHV-1 inhibits NF-kappa-B activation. Post-translationally, reversibly acetylated; the acetylation seems to be mediated by CBP, the deacetylation by HDAC3 and SIRT2. Acetylation at Lys-122 enhances DNA binding and impairs association with NFKBIA. Acetylation at Lys-310 is required for full transcriptional activity in the absence of effects on DNA binding and NFKBIA association. Acetylation at Lys-310 promotes interaction with BRD4. Acetylation can also lower DNA-binding and results in nuclear export. Interaction with BRMS1 promotes deacetylation of Lys-310. Lys-310 is deacetylated by SIRT2. S-nitrosylation of Cys-38 inactivates the enzyme activity. In terms of processing, sulfhydration at Cys-38 mediates the anti-apoptotic activity by promoting the interaction with RPS3 and activating the transcription factor activity. Post-translationally, sumoylation by PIAS3 negatively regulates DNA-bound activated NF-kappa-B. Proteolytically cleaved within a conserved N-terminus region required for base-specific contact with DNA in a CPEN1-mediated manner, and hence inhibits NF-kappa-B transcriptional activity.

The protein resides in the nucleus. It is found in the cytoplasm. Its function is as follows. NF-kappa-B is a pleiotropic transcription factor present in almost all cell types and is the endpoint of a series of signal transduction events that are initiated by a vast array of stimuli related to many biological processes such as inflammation, immunity, differentiation, cell growth, tumorigenesis and apoptosis. NF-kappa-B is a homo- or heterodimeric complex formed by the Rel-like domain-containing proteins RELA/p65, RELB, NFKB1/p105, NFKB1/p50, REL and NFKB2/p52. The heterodimeric RELA-NFKB1 complex appears to be most abundant one. The dimers bind at kappa-B sites in the DNA of their target genes and the individual dimers have distinct preferences for different kappa-B sites that they can bind with distinguishable affinity and specificity. Different dimer combinations act as transcriptional activators or repressors, respectively. The NF-kappa-B heterodimeric RELA-NFKB1 and RELA-REL complexes, for instance, function as transcriptional activators. NF-kappa-B is controlled by various mechanisms of post-translational modification and subcellular compartmentalization as well as by interactions with other cofactors or corepressors. NF-kappa-B complexes are held in the cytoplasm in an inactive state complexed with members of the NF-kappa-B inhibitor (I-kappa-B) family. In a conventional activation pathway, I-kappa-B is phosphorylated by I-kappa-B kinases (IKKs) in response to different activators, subsequently degraded thus liberating the active NF-kappa-B complex which translocates to the nucleus. The inhibitory effect of I-kappa-B on NF-kappa-B through retention in the cytoplasm is exerted primarily through the interaction with RELA. RELA shows a weak DNA-binding site which could contribute directly to DNA binding in the NF-kappa-B complex. Besides its activity as a direct transcriptional activator, it is also able to modulate promoters accessibility to transcription factors and thereby indirectly regulate gene expression. Associates with chromatin at the NF-kappa-B promoter region via association with DDX1. Essential for cytokine gene expression in T-cells. The NF-kappa-B homodimeric RELA-RELA complex appears to be involved in invasin-mediated activation of IL-8 expression. Key transcription factor regulating the IFN response during SARS-CoV-2 infection. The sequence is that of Transcription factor p65 (RELA) from Homo sapiens (Human).